Reading from the N-terminus, the 122-residue chain is Ribosomal protein eL22-like (122 aa).

Residues serine 112, serine 118, and serine 120 each carry the phosphoserine modification.

This sequence belongs to the eukaryotic ribosomal protein eL22 family.

The sequence is that of Ribosomal protein eL22-like (RPL22L1) from Bos taurus (Bovine).